The chain runs to 249 residues: MTKDETLLVFTLVVSSVSVFLFGILLFMVLISATRDFRERTKSKLVKIMIWAGIVVITFAIAVRIYPIFIFLLKERIKPLVEALYDKLPWIWEVSLSRYWDRLIDFLDRYLWACAQRIQTGIRKQKGEFVVTFSCRVKKRLYARAIEVGIHLSLLSNLFWILKTTLAVGYRLLWVLYYIISFEGFLGSFRLYLVYFGFYCLLFSGKWLRTSEDRGERQAQISGILLRGMLIECAFSVLCLEEDSNLHAL.

This sequence belongs to the ycf73 family.

Its subcellular location is the plastid. It localises to the chloroplast. This is an uncharacterized protein from Oryza sativa (Rice).